A 475-amino-acid polypeptide reads, in one-letter code: MTDSVVTRFAPSPTGFLHIGGARTALFNWLYAKKHGGKMLLRIEDTDRERSTEAAIGAILDGLKWLELGWDGDVIYQFSRAARHREVAEQLLADGKAYRCYATAEELTAMREKARAEGRTRLYDGMWRDRDPATAPSDVKPTIRLRAPQTGETVIEDQVQGRVVWQNENLDDLVLLRGDGNPTYMLAVVVDDHDMGVTHVIRGDDHLINAARQKQIHDAMGWALPSMSHIPLIHGPDGSKLSKRHGALGVDAYRAMGYLPAALRNYLVRLGWSHGDQEIFSTEEMIAAFDLSSVGRAAARFDFAKLENLNGHYIRHADDQSLVKMFEDVLDHVVPSRDELKAKLNDTTRAQLLKAMPALKERAKTLIELIDSAYFIFADRPLELDPKAQALLTPDNRKLIGQLHSALENVETWSGATTEAALRAFAEENSLKLGAVAQPLRAALTGRTTSPGIFEVLDVLGRQESLGRLKDQAKD.

Positions 11 to 21 (PSPTGFLHIGG) match the 'HIGH' region motif. A 'KMSKS' region motif is present at residues 240–244 (KLSKR). Lys-243 serves as a coordination point for ATP.

It belongs to the class-I aminoacyl-tRNA synthetase family. Glutamate--tRNA ligase type 1 subfamily. In terms of assembly, monomer.

Its subcellular location is the cytoplasm. The catalysed reaction is tRNA(Glu) + L-glutamate + ATP = L-glutamyl-tRNA(Glu) + AMP + diphosphate. In terms of biological role, catalyzes the attachment of glutamate to tRNA(Glu) in a two-step reaction: glutamate is first activated by ATP to form Glu-AMP and then transferred to the acceptor end of tRNA(Glu). The polypeptide is Glutamate--tRNA ligase (Bradyrhizobium diazoefficiens (strain JCM 10833 / BCRC 13528 / IAM 13628 / NBRC 14792 / USDA 110)).